We begin with the raw amino-acid sequence, 220 residues long: Small ribosomal subunit protein uS3 (220 aa).

One can recognise a KH type-2 domain in the interval Ile38–Arg106.

This sequence belongs to the universal ribosomal protein uS3 family. As to quaternary structure, part of the 30S ribosomal subunit. Forms a tight complex with proteins S10 and S14.

Functionally, binds the lower part of the 30S subunit head. Binds mRNA in the 70S ribosome, positioning it for translation. The sequence is that of Small ribosomal subunit protein uS3 from Myxococcus xanthus (strain DK1622).